Consider the following 158-residue polypeptide: Ribosome maturation factor RimP (158 aa).

This sequence belongs to the RimP family.

Its subcellular location is the cytoplasm. Required for maturation of 30S ribosomal subunits. The protein is Ribosome maturation factor RimP of Lactobacillus gasseri (strain ATCC 33323 / DSM 20243 / BCRC 14619 / CIP 102991 / JCM 1131 / KCTC 3163 / NCIMB 11718 / NCTC 13722 / AM63).